The sequence spans 357 residues: Protein-glutamate methylesterase/protein-glutamine glutaminase (357 aa).

In terms of domain architecture, Response regulatory spans 3-120; it reads RVLVVDDSAF…SIDLYKVRDM (118 aa). Asp54 is modified (4-aspartylphosphate). One can recognise a CheB-type methylesterase domain in the interval 161–355; sequence FRAGKQLICI…AAIMTYMKKE (195 aa). Catalysis depends on residues Ser173, His200, and Asp296.

The protein belongs to the CheB family. Phosphorylated by CheA. Phosphorylation of the N-terminal regulatory domain activates the methylesterase activity.

It localises to the cytoplasm. The catalysed reaction is [protein]-L-glutamate 5-O-methyl ester + H2O = L-glutamyl-[protein] + methanol + H(+). The enzyme catalyses L-glutaminyl-[protein] + H2O = L-glutamyl-[protein] + NH4(+). Functionally, involved in chemotaxis. Part of a chemotaxis signal transduction system that modulates chemotaxis in response to various stimuli. Catalyzes the demethylation of specific methylglutamate residues introduced into the chemoreceptors (methyl-accepting chemotaxis proteins or MCP) by CheR. Also mediates the irreversible deamidation of specific glutamine residues to glutamic acid. The chain is Protein-glutamate methylesterase/protein-glutamine glutaminase from Bacillus licheniformis (strain ATCC 14580 / DSM 13 / JCM 2505 / CCUG 7422 / NBRC 12200 / NCIMB 9375 / NCTC 10341 / NRRL NRS-1264 / Gibson 46).